The following is a 134-amino-acid chain: Methylglyoxal synthase (134 aa).

Residues 1–134 (MVNLNIALIA…GLLEWRNAVK (134 aa)) form the MGS-like domain. Residues histidine 11, lysine 15, and 37–40 (TGAT) each bind substrate. Aspartate 63 serves as the catalytic Proton donor/acceptor. Histidine 90 contributes to the substrate binding site.

The protein belongs to the methylglyoxal synthase family.

It catalyses the reaction dihydroxyacetone phosphate = methylglyoxal + phosphate. Functionally, catalyzes the formation of methylglyoxal from dihydroxyacetone phosphate. The polypeptide is Methylglyoxal synthase (Thermoanaerobacterium thermosaccharolyticum (Clostridium thermosaccharolyticum)).